Reading from the N-terminus, the 1056-residue chain is ATP-dependent helicase wrn-1 (1056 aa).

The tract at residues M1–D102 is disordered. 2 consecutive repeat copies span residues N17 to E26 and N28 to E37. A 2 X 10 AA repeats of N-[ED]-E-L-P-E-T-E-P-E region spans residues N17–E37. The span at E19–S38 shows a compositional bias: acidic residues. Residues P43 to Q53 show a composition bias toward polar residues. The span at V54–D63 shows a compositional bias: acidic residues. Residues V236 to L406 form the Helicase ATP-binding domain. An ATP-binding site is contributed by M249–S256. Positions D348–H351 match the DEAH box motif. Residues M427–E583 form the Helicase C-terminal domain. Zn(2+)-binding residues include C591, C614, C615, and C618. Residues K749–E771 form a disordered region. The span at S761–E771 shows a compositional bias: polar residues. In terms of domain architecture, HRDC spans P806–A886. The segment at Q1018–L1056 is disordered. Positions S1025–L1046 are enriched in polar residues.

This sequence belongs to the helicase family. RecQ subfamily. The cofactor is Zn(2+).

The protein localises to the nucleus. It catalyses the reaction Couples ATP hydrolysis with the unwinding of duplex DNA by translocating in the 3'-5' direction.. It carries out the reaction ATP + H2O = ADP + phosphate + H(+). Its function is as follows. Essential for the formation of DNA replication focal centers; stably associates with foci elements generating binding sites for RP-A. Exhibits a magnesium-dependent ATP-dependent 3'-5' DNA-helicase activity. May be involved in the control of genomic stability. The polypeptide is ATP-dependent helicase wrn-1 (wrn-1) (Caenorhabditis elegans).